Here is a 147-residue protein sequence, read N- to C-terminus: Endothelial differentiation-related factor 1 homolog (147 aa).

The tract at residues Met1 to His69 is disordered. Over residues Arg33–Lys42 the composition is skewed to basic and acidic residues. Polar residues predominate over residues Ala46 to Thr58. Positions Ala59 to His69 are enriched in basic and acidic residues. The HTH cro/C1-type domain maps to Ile81–Lys135. Residues Gln92–Cys111 constitute a DNA-binding region (H-T-H motif).

It is found in the nucleus. In terms of biological role, probable transcriptional coactivator. The polypeptide is Endothelial differentiation-related factor 1 homolog (edf1) (Xenopus laevis (African clawed frog)).